Reading from the N-terminus, the 380-residue chain is 4-hydroxy-3-methylbut-2-en-1-yl diphosphate synthase (flavodoxin) (380 aa).

Positions 273, 276, 308, and 315 each coordinate [4Fe-4S] cluster.

It belongs to the IspG family. It depends on [4Fe-4S] cluster as a cofactor.

It catalyses the reaction (2E)-4-hydroxy-3-methylbut-2-enyl diphosphate + oxidized [flavodoxin] + H2O + 2 H(+) = 2-C-methyl-D-erythritol 2,4-cyclic diphosphate + reduced [flavodoxin]. The protein operates within isoprenoid biosynthesis; isopentenyl diphosphate biosynthesis via DXP pathway; isopentenyl diphosphate from 1-deoxy-D-xylulose 5-phosphate: step 5/6. In terms of biological role, converts 2C-methyl-D-erythritol 2,4-cyclodiphosphate (ME-2,4cPP) into 1-hydroxy-2-methyl-2-(E)-butenyl 4-diphosphate. The sequence is that of 4-hydroxy-3-methylbut-2-en-1-yl diphosphate synthase (flavodoxin) from Leifsonia xyli subsp. xyli (strain CTCB07).